The chain runs to 514 residues: Multifunctional alkaline phosphatase superfamily protein pRL90232 (514 aa).

Mn(2+)-binding residues include D12, C57, D324, and H325. C57 acts as the Nucleophile in catalysis. C57 carries the post-translational modification 3-oxoalanine (Cys).

Belongs to the alkaline phosphatase superfamily. Homotetramer. The cofactor is Mn(2+). In terms of processing, the conversion to 3-oxoalanine (also known as C-formylglycine, FGly), of a serine or cysteine residue in prokaryotes and of a cysteine residue in eukaryotes, is critical for catalytic activity.

Functionally, hydrolytic enzyme with a broad substrate specificity acting on phosphate diesters and phosphonate monoesters. The protein is Multifunctional alkaline phosphatase superfamily protein pRL90232 of Rhizobium johnstonii (strain DSM 114642 / LMG 32736 / 3841) (Rhizobium leguminosarum bv. viciae).